A 742-amino-acid polypeptide reads, in one-letter code: Phosphoribosylformylglycinamidine synthase subunit PurL (742 aa).

Residue H54 is part of the active site. Positions 57 and 96 each coordinate ATP. E98 is a Mg(2+) binding site. Substrate-binding positions include 99-102 (SHNH) and R121. H100 functions as the Proton acceptor in the catalytic mechanism. Position 122 (D122) interacts with Mg(2+). The substrate site is built by G225 and Q245. A Mg(2+)-binding site is contributed by D273. 317 to 319 (ESQ) contributes to the substrate binding site. Residue G537 coordinates ATP. N538 serves as a coordination point for Mg(2+). S540 is a binding site for substrate.

Belongs to the FGAMS family. In terms of assembly, monomer. Part of the FGAM synthase complex composed of 1 PurL, 1 PurQ and 2 PurS subunits.

It localises to the cytoplasm. The enzyme catalyses N(2)-formyl-N(1)-(5-phospho-beta-D-ribosyl)glycinamide + L-glutamine + ATP + H2O = 2-formamido-N(1)-(5-O-phospho-beta-D-ribosyl)acetamidine + L-glutamate + ADP + phosphate + H(+). The catalysed reaction is L-glutamine + H2O = L-glutamate + NH4(+). The protein operates within purine metabolism; IMP biosynthesis via de novo pathway; 5-amino-1-(5-phospho-D-ribosyl)imidazole from N(2)-formyl-N(1)-(5-phospho-D-ribosyl)glycinamide: step 1/2. Its function is as follows. Part of the phosphoribosylformylglycinamidine synthase complex involved in the purines biosynthetic pathway. Catalyzes the ATP-dependent conversion of formylglycinamide ribonucleotide (FGAR) and glutamine to yield formylglycinamidine ribonucleotide (FGAM) and glutamate. The FGAM synthase complex is composed of three subunits. PurQ produces an ammonia molecule by converting glutamine to glutamate. PurL transfers the ammonia molecule to FGAR to form FGAM in an ATP-dependent manner. PurS interacts with PurQ and PurL and is thought to assist in the transfer of the ammonia molecule from PurQ to PurL. The sequence is that of Phosphoribosylformylglycinamidine synthase subunit PurL from Bacillus subtilis (strain 168).